Here is a 372-residue protein sequence, read N- to C-terminus: Mitogen-activated protein kinase homolog NTF3 (372 aa).

The region spanning 32-319 (YVPIKPIGRG…VIEALQHPYM (288 aa)) is the Protein kinase domain. ATP contacts are provided by residues 38 to 46 (IGRGAYGIV) and Lys-61. Catalysis depends on Asp-158, which acts as the Proton acceptor. Thr-191 is subject to Phosphothreonine. The short motif at 191–193 (TEY) is the TXY element. Tyr-193 carries the phosphotyrosine modification.

The protein belongs to the protein kinase superfamily. CMGC Ser/Thr protein kinase family. MAP kinase subfamily. Mg(2+) serves as cofactor. In terms of processing, dually phosphorylated on Thr-191 and Tyr-193, which activates the enzyme. Very low autophosphorylation, although dramatically increased when Mn(2+) is added to the reaction instead of Mg(2+). In terms of tissue distribution, ubiquitous.

It carries out the reaction L-seryl-[protein] + ATP = O-phospho-L-seryl-[protein] + ADP + H(+). It catalyses the reaction L-threonyl-[protein] + ATP = O-phospho-L-threonyl-[protein] + ADP + H(+). With respect to regulation, activated by tyrosine and threonine phosphorylation. In Nicotiana tabacum (Common tobacco), this protein is Mitogen-activated protein kinase homolog NTF3 (NTF3).